The chain runs to 113 residues: U11-theraphotoxin-Hhn1a (113 aa).

A signal peptide spans 1 to 21 (MNTVRVTFLLVFVLAVSLGQA). A propeptide spanning residues 22–74 (DKDENRMEMQEKTEQGESYLDFAENLLLQKLEELEAKLLEEDSEESRNSRQKR) is cleaved from the precursor. Cystine bridges form between cysteine 75/cysteine 90, cysteine 82/cysteine 95, and cysteine 89/cysteine 110.

Belongs to the neurotoxin 14 (magi-1) family. 01 (HNTX-16) subfamily. Expressed by the venom gland.

The protein localises to the secreted. In terms of biological role, probable ion channel inhibitor. In Cyriopagopus hainanus (Chinese bird spider), this protein is U11-theraphotoxin-Hhn1a.